Here is a 565-residue protein sequence, read N- to C-terminus: Proline--tRNA ligase (565 aa).

This sequence belongs to the class-II aminoacyl-tRNA synthetase family. ProS type 1 subfamily. In terms of assembly, homodimer.

It localises to the cytoplasm. It carries out the reaction tRNA(Pro) + L-proline + ATP = L-prolyl-tRNA(Pro) + AMP + diphosphate. Functionally, catalyzes the attachment of proline to tRNA(Pro) in a two-step reaction: proline is first activated by ATP to form Pro-AMP and then transferred to the acceptor end of tRNA(Pro). As ProRS can inadvertently accommodate and process non-cognate amino acids such as alanine and cysteine, to avoid such errors it has two additional distinct editing activities against alanine. One activity is designated as 'pretransfer' editing and involves the tRNA(Pro)-independent hydrolysis of activated Ala-AMP. The other activity is designated 'posttransfer' editing and involves deacylation of mischarged Ala-tRNA(Pro). The misacylated Cys-tRNA(Pro) is not edited by ProRS. The chain is Proline--tRNA ligase from Lactobacillus delbrueckii subsp. bulgaricus (strain ATCC BAA-365 / Lb-18).